We begin with the raw amino-acid sequence, 219 residues long: Ribose-5-phosphate isomerase A (219 aa).

Residues 28–31, 81–84, and 94–97 contribute to the substrate site; these read SGST, DGAD, and KGGG. Glu103 serves as the catalytic Proton acceptor. Lys121 lines the substrate pocket.

The protein belongs to the ribose 5-phosphate isomerase family. In terms of assembly, homodimer.

The enzyme catalyses aldehydo-D-ribose 5-phosphate = D-ribulose 5-phosphate. It functions in the pathway carbohydrate degradation; pentose phosphate pathway; D-ribose 5-phosphate from D-ribulose 5-phosphate (non-oxidative stage): step 1/1. Its function is as follows. Catalyzes the reversible conversion of ribose-5-phosphate to ribulose 5-phosphate. The sequence is that of Ribose-5-phosphate isomerase A from Haemophilus influenzae (strain PittGG).